Consider the following 309-residue polypeptide: Peptidyl-prolyl cis-trans isomerase 9 (309 aa).

The PPIase cyclophilin-type domain maps to 8-173; sequence FLDISVDENL…AKVLISNCGE (166 aa). Composition is skewed to basic and acidic residues over residues 217–229, 239–265, 280–289, and 296–309; these read NEKKHEMRNDKRR, RSHEKNRDYKKENRGDSSRSQPRRDEN, ERSATPEHWR, and WVHDSHKHPEEDLV. Residues 217 to 309 are disordered; that stretch reads NEKKHEMRND…SHKHPEEDLV (93 aa).

Belongs to the cyclophilin-type PPIase family. In terms of tissue distribution, co-expressed with pdi-1 in the syncytial hypodermis.

It carries out the reaction [protein]-peptidylproline (omega=180) = [protein]-peptidylproline (omega=0). Its function is as follows. PPIases accelerate the folding of proteins. It catalyzes the cis-trans isomerization of proline imidic peptide bonds in oligopeptides. Thought to function as a catalyst in the folding and modification of cuticle collagens. This is Peptidyl-prolyl cis-trans isomerase 9 (cyn-9) from Caenorhabditis elegans.